A 139-amino-acid polypeptide reads, in one-letter code: Putative nickel-responsive regulator (139 aa).

4 residues coordinate Ni(2+): His-79, His-90, His-92, and Cys-98.

The protein belongs to the transcriptional regulatory CopG/NikR family. Ni(2+) serves as cofactor.

In terms of biological role, transcriptional regulator. The chain is Putative nickel-responsive regulator from Solibacter usitatus (strain Ellin6076).